The following is a 315-amino-acid chain: Phosphomutase-like protein 3 (315 aa).

An N-terminal signal peptide occupies residues 1–19 (MQQFLTLGALWTLFNVATT). His77 serves as the catalytic Tele-phosphohistidine intermediate. N-linked (GlcNAc...) asparagine glycans are attached at residues Asn88 and Asn154. Catalysis depends on Glu173, which acts as the Proton donor/acceptor. An N-linked (GlcNAc...) asparagine glycan is attached at Asn185. The GPI-anchor amidated asparagine moiety is linked to residue Asn286. Positions 287–315 (DAWDTFKDWCPNPPASISGTATSTATGSA) are cleaved as a propeptide — removed in mature form.

The protein belongs to the phosphoglycerate mutase family.

The protein localises to the cell membrane. The chain is Phosphomutase-like protein 3 (PGA12) from Candida albicans (strain SC5314 / ATCC MYA-2876) (Yeast).